Consider the following 205-residue polypeptide: Non-specific lipid transfer protein GPI-anchored 13 (205 aa).

Residues 1-24 form the signal peptide; it reads MESRKIKVMATAIALIMVAMVVDA. Disulfide bonds link C36/C77, C46/C61, C62/C104, and C75/C113. 3 N-linked (GlcNAc...) asparagine glycosylation sites follow: N93, N137, and N165. The segment at 141 to 176 is disordered; that stretch reads SASAPTGSASEPTSMSSTPGSSAGNNSGRTTSVPGT. Residue N177 is the site of GPI-anchor amidated asparagine attachment. A propeptide spans 178–205 (removed in mature form); that stretch reads HAQSFSKQWLGLEVVAHFFVIFYIFILV.

Belongs to the plant LTP family. In terms of tissue distribution, expressed preferentially in expanding leaves and sepals, restricted to the distal side. Expressed at low levels in roots and stems.

The protein resides in the cell membrane. Its function is as follows. Probable lipid transfer protein. The polypeptide is Non-specific lipid transfer protein GPI-anchored 13 (Arabidopsis thaliana (Mouse-ear cress)).